Consider the following 45-residue polypeptide: Large ribosomal subunit protein bL34c (45 aa).

This sequence belongs to the bacterial ribosomal protein bL34 family.

It localises to the plastid. Its subcellular location is the chloroplast. This chain is Large ribosomal subunit protein bL34c, found in Emiliania huxleyi (Coccolithophore).